The primary structure comprises 356 residues: Golgi-resident adenosine 3',5'-bisphosphate 3'-phosphatase (356 aa).

The residue at position 1 (Met-1) is an N-acetylmethionine. The Cytoplasmic segment spans residues Met-1 to Gly-12. Residues Val-13–Ala-33 traverse the membrane as a helical segment. The Lumenal segment spans residues Gly-34 to His-356. The segment at Glu-84–Met-104 is disordered. Asp-108 serves as the catalytic Proton acceptor. 4 residues coordinate Mg(2+): Glu-131, Asp-172, Leu-174, and Asp-175. The active-site Proton acceptor is the Thr-177. AMP-binding residues include Ser-240 and His-243. N-linked (GlcNAc...) asparagine glycosylation is present at Asn-257. Residues Gly-266 and Lys-270 each coordinate AMP. Asp-298 lines the Mg(2+) pocket.

Belongs to the inositol monophosphatase superfamily. Mg(2+) is required as a cofactor. In terms of processing, N-glycosylated. Contains N-linked glycan resistant to endoglycosydase H.

The protein resides in the golgi apparatus. The protein localises to the trans-Golgi network membrane. The catalysed reaction is adenosine 3',5'-bisphosphate + H2O = AMP + phosphate. The protein operates within sulfur metabolism. Its activity is regulated as follows. Strongly inhibited by lithium. Exhibits 3'-nucleotidase activity toward adenosine 3',5'-bisphosphate (PAP), namely hydrolyzes adenosine 3',5'-bisphosphate into adenosine 5'-monophosphate (AMP) and a phosphate. May play a role in the formation of skeletal elements derived through endochondral ossification, possibly by clearing adenosine 3',5'-bisphosphate produced by Golgi sulfotransferases during glycosaminoglycan sulfation. Has no activity toward 3'-phosphoadenosine 5'-phosphosulfate (PAPS) or inositol phosphate (IP) substrates including I(1)P, I(1,4)P2, I(1,3,4)P3, I(1,4,5)P3 and I(1,3,4,5)P4. This is Golgi-resident adenosine 3',5'-bisphosphate 3'-phosphatase from Mus musculus (Mouse).